Here is a 259-residue protein sequence, read N- to C-terminus: Autophagy-related protein 27 (259 aa).

Positions 1 to 15 (MWFPILTWLVATAVA) are cleaved as a signal peptide. An MRH domain is found at 16–167 (LDCSAKDLDS…QVKSKAACVT (152 aa)). The Lumenal segment spans residues 16-184 (LDCSAKDLDS…PKKPEDNGES (169 aa)). Disulfide bonds link cysteine 18–cysteine 57, cysteine 68–cysteine 75, and cysteine 135–cysteine 165. Residues 185–205 (WGWFTWIFIFMVLFLSIYIIG) form a helical membrane-spanning segment. Residues 206–259 (GAWFQYNKGNAIDFQSALREVLENFVDLVRGLPSFIREIIEKVTGSNRGEYSAV) lie on the Cytoplasmic side of the membrane.

The protein belongs to the ATG27 family.

The protein localises to the cytoplasmic vesicle membrane. It is found in the golgi apparatus membrane. It localises to the mitochondrion membrane. The protein resides in the preautophagosomal structure membrane. In terms of biological role, effector of VPS34 phosphatidylinositol 3-phosphate kinase signaling. Regulates the cytoplasm to vacuole transport (Cvt) vesicle formation. Plays a role in ATG protein retrieval from the pre-autophagosomal structure (PAS) and is especially required for autophagy-dependent cycling of ATG9. This Meyerozyma guilliermondii (strain ATCC 6260 / CBS 566 / DSM 6381 / JCM 1539 / NBRC 10279 / NRRL Y-324) (Yeast) protein is Autophagy-related protein 27 (ATG27).